The primary structure comprises 790 residues: Histone-lysine N-methyltransferase, H3 lysine-9 specific SUVH6 (790 aa).

The segment at Q251–N271 is disordered. Positions G256 to S268 are enriched in low complexity. The 153-residue stretch at G330–R482 folds into the YDG domain. Residues K551–G613 form the Pre-SET domain. 10 residues coordinate Zn(2+): C553, C554, C555, C559, C567, C569, C595, C599, C601, and C605. One can recognise an SET domain in the interval L616 to N760. Residues R626–W628, D662, Y664, R714, and N717–H718 each bind S-adenosyl-L-methionine. 4 residues coordinate Zn(2+): C720, C778, C780, and C785. The region spanning K774–Y790 is the Post-SET domain.

This sequence belongs to the class V-like SAM-binding methyltransferase superfamily. Histone-lysine methyltransferase family. Suvar3-9 subfamily.

It localises to the nucleus. The protein resides in the chromosome. The protein localises to the centromere. The catalysed reaction is N(6)-methyl-L-lysyl(9)-[histone H3] + S-adenosyl-L-methionine = N(6),N(6)-dimethyl-L-lysyl(9)-[histone H3] + S-adenosyl-L-homocysteine + H(+). The enzyme catalyses L-lysyl(9)-[histone H3] + S-adenosyl-L-methionine = N(6)-methyl-L-lysyl(9)-[histone H3] + S-adenosyl-L-homocysteine + H(+). Its function is as follows. Histone methyltransferase. Methylates 'Lys-9' of histone H3. H3 'Lys-9' methylation represents a specific tag for epigenetic transcriptional repression. Seems to act preferentially on dsMRNA. The sequence is that of Histone-lysine N-methyltransferase, H3 lysine-9 specific SUVH6 (SUVH6) from Arabidopsis thaliana (Mouse-ear cress).